The sequence spans 128 residues: MTSSPDITVSVQVHHLPAQSTPQRQLFAYFITIENNTDDSWKLLSRHWTITSGDGQQFTVEGEGVVGEQPLLAPGAQYTYNSFVTVDALPGRMEGHYVMGDAWGQTAQVPIPPFRLDIAPESGERLLN.

Positions 1-123 constitute an ApaG domain; the sequence is MTSSPDITVS…FRLDIAPESG (123 aa).

The chain is Protein ApaG from Deinococcus radiodurans (strain ATCC 13939 / DSM 20539 / JCM 16871 / CCUG 27074 / LMG 4051 / NBRC 15346 / NCIMB 9279 / VKM B-1422 / R1).